The following is a 156-amino-acid chain: Small ribosomal subunit protein uS7 (156 aa).

It belongs to the universal ribosomal protein uS7 family. In terms of assembly, part of the 30S ribosomal subunit. Contacts proteins S9 and S11.

Functionally, one of the primary rRNA binding proteins, it binds directly to 16S rRNA where it nucleates assembly of the head domain of the 30S subunit. Is located at the subunit interface close to the decoding center, probably blocks exit of the E-site tRNA. The chain is Small ribosomal subunit protein uS7 from Mycoplasmopsis agalactiae (strain NCTC 10123 / CIP 59.7 / PG2) (Mycoplasma agalactiae).